We begin with the raw amino-acid sequence, 1068 residues long: Putative protein TIC 214 N-terminal part (1068 aa).

Helical transmembrane passes span 11–31, 68–88, 92–112, 131–151, 166–186, and 213–233; these read VLWVPILSWINFSSTFFLFGI, ITGQLLIFLSIFYSPLYVLLI, LLTLLVLPYILFYWYKIKDLI, IFFDSFIFQLFNPVVLPSPVL, FIFLLSSFLGWCFGQFLFVSL, and FSIIILSFSLLHLSRAPVPFI.

The protein belongs to the TIC214 family. As to quaternary structure, part of the Tic complex.

It is found in the plastid. The protein resides in the chloroplast inner membrane. Functionally, involved in protein precursor import into chloroplasts. May be part of an intermediate translocation complex acting as a protein-conducting channel at the inner envelope. The polypeptide is Putative protein TIC 214 N-terminal part (Marchantia polymorpha (Common liverwort)).